A 142-amino-acid chain; its full sequence is Chorion protein S16 (142 aa).

A signal peptide spans 1–21; the sequence is MSANYMRLLCLMACCLSICLA.

This sequence belongs to the chorion protein S16 family.

The protein resides in the secreted. Chorion membrane (egg shell) protein; plays a role in protecting the egg from the environment. In Drosophila grimshawi (Hawaiian fruit fly), this protein is Chorion protein S16 (Cp16).